Here is a 305-residue protein sequence, read N- to C-terminus: Homoserine kinase (305 aa).

93-103 (PLSRGLGSSAT) contacts ATP.

It belongs to the GHMP kinase family. Homoserine kinase subfamily.

It localises to the cytoplasm. It catalyses the reaction L-homoserine + ATP = O-phospho-L-homoserine + ADP + H(+). It functions in the pathway amino-acid biosynthesis; L-threonine biosynthesis; L-threonine from L-aspartate: step 4/5. Catalyzes the ATP-dependent phosphorylation of L-homoserine to L-homoserine phosphate. This chain is Homoserine kinase, found in Picosynechococcus sp. (strain ATCC 27264 / PCC 7002 / PR-6) (Agmenellum quadruplicatum).